Here is a 223-residue protein sequence, read N- to C-terminus: Serine/threonine/tyrosine-interacting protein A (223 aa).

The 149-residue stretch at 28–176 folds into the Tyrosine-protein phosphatase domain; the sequence is EMQEILPGLF…LQEYEAIYLA (149 aa).

This sequence belongs to the protein-tyrosine phosphatase family. Non-receptor class subfamily.

Its function is as follows. Catalytically inactive phosphatase. The chain is Serine/threonine/tyrosine-interacting protein A (styx-a) from Xenopus laevis (African clawed frog).